Reading from the N-terminus, the 485-residue chain is Glutamate--tRNA ligase (485 aa).

The short motif at 12-22 is the 'HIGH' region element; it reads PSPTGEPHVGT. A 'KMSKS' region motif is present at residues 253-257; that stretch reads KLSKR. Lys256 is a binding site for ATP.

Belongs to the class-I aminoacyl-tRNA synthetase family. Glutamate--tRNA ligase type 1 subfamily. In terms of assembly, monomer.

The protein resides in the cytoplasm. It catalyses the reaction tRNA(Glu) + L-glutamate + ATP = L-glutamyl-tRNA(Glu) + AMP + diphosphate. Catalyzes the attachment of glutamate to tRNA(Glu) in a two-step reaction: glutamate is first activated by ATP to form Glu-AMP and then transferred to the acceptor end of tRNA(Glu). This Rhizobium meliloti (strain 1021) (Ensifer meliloti) protein is Glutamate--tRNA ligase.